Here is a 362-residue protein sequence, read N- to C-terminus: Peptide chain release factor 1 (362 aa).

N5-methylglutamine is present on glutamine 236.

Belongs to the prokaryotic/mitochondrial release factor family. Post-translationally, methylated by PrmC. Methylation increases the termination efficiency of RF1.

It is found in the cytoplasm. Functionally, peptide chain release factor 1 directs the termination of translation in response to the peptide chain termination codons UAG and UAA. This is Peptide chain release factor 1 from Lactobacillus gasseri (strain ATCC 33323 / DSM 20243 / BCRC 14619 / CIP 102991 / JCM 1131 / KCTC 3163 / NCIMB 11718 / NCTC 13722 / AM63).